An 82-amino-acid polypeptide reads, in one-letter code: Small ribosomal subunit protein eS21z (82 aa).

The residue at position 1 (Met1) is an N-acetylmethionine.

This sequence belongs to the eukaryotic ribosomal protein eS21 family.

This chain is Small ribosomal subunit protein eS21z (RPS21B), found in Arabidopsis thaliana (Mouse-ear cress).